Consider the following 473-residue polypeptide: Arginine biosynthesis bifunctional protein ArgJ, mitochondrial (473 aa).

6 residues coordinate substrate: threonine 201, lysine 230, threonine 241, glutamate 328, asparagine 468, and threonine 473. Threonine 241 functions as the Nucleophile in the catalytic mechanism.

The protein belongs to the ArgJ family. As to quaternary structure, heterodimer of an alpha and a beta chain. The alpha and beta chains are autoproteolytically processed from a single precursor protein within the mitochondrion.

It localises to the mitochondrion matrix. The enzyme catalyses N(2)-acetyl-L-ornithine + L-glutamate = N-acetyl-L-glutamate + L-ornithine. The catalysed reaction is L-glutamate + acetyl-CoA = N-acetyl-L-glutamate + CoA + H(+). Its pathway is amino-acid biosynthesis; L-arginine biosynthesis; L-ornithine and N-acetyl-L-glutamate from L-glutamate and N(2)-acetyl-L-ornithine (cyclic): step 1/1. The protein operates within amino-acid biosynthesis; L-arginine biosynthesis; N(2)-acetyl-L-ornithine from L-glutamate: step 1/4. Its function is as follows. Catalyzes two activities which are involved in the cyclic version of arginine biosynthesis: the synthesis of acetylglutamate from glutamate and acetyl-CoA, and of ornithine by transacetylation between acetylornithine and glutamate. The sequence is that of Arginine biosynthesis bifunctional protein ArgJ, mitochondrial from Paracoccidioides brasiliensis (strain Pb18).